The primary structure comprises 454 residues: Retinoblastoma-binding protein homolog 5 (454 aa).

6 WD repeats span residues 23–64 (LQNA…RTFS), 65–104 (AHCL…LLHR), 153–192 (SSDE…CVAW), 196–235 (NTVQ…HQRG), 248–288 (VNKA…LIKI), and 292–330 (NKGE…NWSA).

In terms of assembly, component of the SET2 complex (also known as the SET1/COMPASS complex), which contains at least set-2, swd-2.1, cfp-1, rbbp-5, wdr-5.1, dpy-30 and ash-2.

The protein localises to the nucleus. Its function is as follows. Required for di- and trimethylation at 'Lys-4' of histone H3. Regulates left/right asymmetry of ASE sensory neurons, via its role as a component of the SET2 complex. In Caenorhabditis elegans, this protein is Retinoblastoma-binding protein homolog 5 (rbbp-5).